A 606-amino-acid polypeptide reads, in one-letter code: Fructan 6-exohydrolase (606 aa).

An N-terminal signal peptide occupies residues 1–21 (MAPNNGSWLVLSISMMLLSHG). N5 carries an N-linked (GlcNAc...) asparagine glycan. D70 is a catalytic residue. 5 N-linked (GlcNAc...) asparagine glycosylation sites follow: N110, N164, N193, N237, and N346. The cysteines at positions 445 and 491 are disulfide-linked. N-linked (GlcNAc...) asparagine glycosylation is found at N564, N585, N590, and N593.

It belongs to the glycosyl hydrolase 32 family.

It catalyses the reaction Hydrolysis of terminal, non-reducing (2-&gt;6)-linked beta-D-fructofuranose residues in fructans.. Its activity is regulated as follows. Not inhibited by sucrose. Hydrolyzes levan-type beta-(2-&gt;6)-linked fructans to fructose, but not inulin-type beta-(2-&gt;1)-linked fructans. The polypeptide is Fructan 6-exohydrolase (Beta vulgaris (Sugar beet)).